The sequence spans 135 residues: DNA-directed RNA polymerase subunit omega (135 aa).

The interval 84–106 (IAGHSSHVSPSRSSRHTGLGKSF) is disordered.

This sequence belongs to the RNA polymerase subunit omega family. The RNAP catalytic core consists of 2 alpha, 1 beta, 1 beta' and 1 omega subunit. When a sigma factor is associated with the core the holoenzyme is formed, which can initiate transcription.

The catalysed reaction is RNA(n) + a ribonucleoside 5'-triphosphate = RNA(n+1) + diphosphate. In terms of biological role, promotes RNA polymerase assembly. Latches the N- and C-terminal regions of the beta' subunit thereby facilitating its interaction with the beta and alpha subunits. This chain is DNA-directed RNA polymerase subunit omega, found in Anaplasma phagocytophilum (strain HZ).